The sequence spans 306 residues: Glutathione transport system permease protein GsiC (306 aa).

The Cytoplasmic portion of the chain corresponds to 1–8; it reads MLNYFIKR. The helical transmembrane segment at 9-29 threads the bilayer; sequence LLGLIPTLLIVMVLVFLFVHL. Over 30-98 the chain is Periplasmic; the sequence is LPGDPARLAA…QEIALRFMPT (69 aa). Residues 95 to 292 form the ABC transmembrane type-1 domain; it reads FMPTFWLTVC…LEFILINLLV (198 aa). A helical transmembrane segment spans residues 99–119; the sequence is FWLTVCSMAWAVIFGMAIGIV. Residues 120 to 130 lie on the Cytoplasmic side of the membrane; sequence SAVWRNGWPDR. A helical membrane pass occupies residues 131 to 151; it reads IGMTLAVSGLSFPAFALGMLL. The Periplasmic segment spans residues 152–168; that stretch reads MQIFSVELGWLPTVGAD. A helical membrane pass occupies residues 169–189; sequence TWLHYILPSLTLGAAVAAVMA. Residues 190–228 lie on the Cytoplasmic side of the membrane; that stretch reads RFTRASFVDVLQEDYMRTARAKGVRESLVVLKHGLRNAL. The helical transmembrane segment at 229–249 threads the bilayer; the sequence is IPVVTMMGLQFGFLLGGSIVV. The Periplasmic portion of the chain corresponds to 250–278; the sequence is EKVFNWPGLGRLLVDSVEMRDYPVIQAEV. A helical transmembrane segment spans residues 279-299; that stretch reads LLFSLEFILINLLVDMLYAAI. The Cytoplasmic segment spans residues 300–306; sequence NPAIRYK.

It belongs to the binding-protein-dependent transport system permease family. The complex is composed of two ATP-binding proteins (GsiA), two transmembrane proteins (GsiC and GsiD) and a solute-binding protein (GsiB).

The protein localises to the cell inner membrane. Its function is as follows. Part of the ABC transporter complex GsiABCD involved in glutathione import. Probably responsible for the translocation of the substrate across the membrane. This chain is Glutathione transport system permease protein GsiC, found in Pectobacterium atrosepticum (strain SCRI 1043 / ATCC BAA-672) (Erwinia carotovora subsp. atroseptica).